A 186-amino-acid polypeptide reads, in one-letter code: Cell wall protein phiA (186 aa).

Residues 1–19 (MKLLAIISASLALAGFTTA) form the signal peptide.

This sequence belongs to the phiA family.

Its subcellular location is the secreted. It localises to the cell wall. Cell wall protein involved in development of asexual structures such as phialide and conidium development, and thus required for spore formation. Plays a role as a general stress protectant produced by the fungus in competition with antagonistic bacteria. The sequence is that of Cell wall protein phiA from Arthroderma benhamiae (strain ATCC MYA-4681 / CBS 112371) (Trichophyton mentagrophytes).